Reading from the N-terminus, the 901-residue chain is Protein translocase subunit SecA 1 (901 aa).

ATP is bound by residues Q89, 107-111, and D502; that span reads GEGKT. Residues 856–875 form a disordered region; that stretch reads AEAKASGDARPGFVEDDPST. C885, C887, C896, and H897 together coordinate Zn(2+).

The protein belongs to the SecA family. Monomer and homodimer. Part of the essential Sec protein translocation apparatus which comprises SecA, SecYEG and auxiliary proteins SecDF-YajC and YidC. Requires Zn(2+) as cofactor.

Its subcellular location is the cell inner membrane. The protein localises to the cytoplasm. It carries out the reaction ATP + H2O + cellular proteinSide 1 = ADP + phosphate + cellular proteinSide 2.. Part of the Sec protein translocase complex. Interacts with the SecYEG preprotein conducting channel. Has a central role in coupling the hydrolysis of ATP to the transfer of proteins into and across the cell membrane, serving both as a receptor for the preprotein-SecB complex and as an ATP-driven molecular motor driving the stepwise translocation of polypeptide chains across the membrane. In Ruegeria pomeroyi (strain ATCC 700808 / DSM 15171 / DSS-3) (Silicibacter pomeroyi), this protein is Protein translocase subunit SecA 1.